The chain runs to 315 residues: 4-hydroxy-3-methylbut-2-enyl diphosphate reductase (315 aa).

Residue cysteine 12 participates in [4Fe-4S] cluster binding. Residues histidine 43 and histidine 81 each coordinate (2E)-4-hydroxy-3-methylbut-2-enyl diphosphate. Dimethylallyl diphosphate is bound by residues histidine 43 and histidine 81. 2 residues coordinate isopentenyl diphosphate: histidine 43 and histidine 81. Cysteine 103 contributes to the [4Fe-4S] cluster binding site. Position 131 (histidine 131) interacts with (2E)-4-hydroxy-3-methylbut-2-enyl diphosphate. Histidine 131 serves as a coordination point for dimethylallyl diphosphate. Histidine 131 lines the isopentenyl diphosphate pocket. The active-site Proton donor is the glutamate 133. A (2E)-4-hydroxy-3-methylbut-2-enyl diphosphate-binding site is contributed by threonine 170. [4Fe-4S] cluster is bound at residue cysteine 198. (2E)-4-hydroxy-3-methylbut-2-enyl diphosphate-binding residues include serine 226, asparagine 228, and serine 271. Dimethylallyl diphosphate-binding residues include serine 226, asparagine 228, and serine 271. The isopentenyl diphosphate site is built by serine 226, asparagine 228, and serine 271.

Belongs to the IspH family. It depends on [4Fe-4S] cluster as a cofactor.

The catalysed reaction is isopentenyl diphosphate + 2 oxidized [2Fe-2S]-[ferredoxin] + H2O = (2E)-4-hydroxy-3-methylbut-2-enyl diphosphate + 2 reduced [2Fe-2S]-[ferredoxin] + 2 H(+). It catalyses the reaction dimethylallyl diphosphate + 2 oxidized [2Fe-2S]-[ferredoxin] + H2O = (2E)-4-hydroxy-3-methylbut-2-enyl diphosphate + 2 reduced [2Fe-2S]-[ferredoxin] + 2 H(+). The protein operates within isoprenoid biosynthesis; dimethylallyl diphosphate biosynthesis; dimethylallyl diphosphate from (2E)-4-hydroxy-3-methylbutenyl diphosphate: step 1/1. It participates in isoprenoid biosynthesis; isopentenyl diphosphate biosynthesis via DXP pathway; isopentenyl diphosphate from 1-deoxy-D-xylulose 5-phosphate: step 6/6. Its function is as follows. Catalyzes the conversion of 1-hydroxy-2-methyl-2-(E)-butenyl 4-diphosphate (HMBPP) into a mixture of isopentenyl diphosphate (IPP) and dimethylallyl diphosphate (DMAPP). Acts in the terminal step of the DOXP/MEP pathway for isoprenoid precursor biosynthesis. The chain is 4-hydroxy-3-methylbut-2-enyl diphosphate reductase from Anoxybacillus flavithermus (strain DSM 21510 / WK1).